We begin with the raw amino-acid sequence, 340 residues long: Tetraacyldisaccharide 4'-kinase (340 aa).

50-57 (HGGGAGKT) serves as a coordination point for ATP.

Belongs to the LpxK family.

It carries out the reaction a lipid A disaccharide + ATP = a lipid IVA + ADP + H(+). It participates in glycolipid biosynthesis; lipid IV(A) biosynthesis; lipid IV(A) from (3R)-3-hydroxytetradecanoyl-[acyl-carrier-protein] and UDP-N-acetyl-alpha-D-glucosamine: step 6/6. Functionally, transfers the gamma-phosphate of ATP to the 4'-position of a tetraacyldisaccharide 1-phosphate intermediate (termed DS-1-P) to form tetraacyldisaccharide 1,4'-bis-phosphate (lipid IVA). In Rhodopseudomonas palustris (strain BisA53), this protein is Tetraacyldisaccharide 4'-kinase.